The sequence spans 147 residues: Ubiquitin-conjugating enzyme E2 D3 (147 aa).

The region spanning 1–147 is the UBC core domain; it reads MALKRINKEL…SREWTQKYAM (147 aa). Residues C21 and C107 are joined by a disulfide bond. The Glycyl thioester intermediate role is filled by C85.

It belongs to the ubiquitin-conjugating enzyme family. In terms of assembly, interacts with SCF (SKP1-CUL1-F-box protein) E3 ubiquitin ligase complex; when Cullin is neddylated, the interaction between the E2 and the SCF complex is strengthened. Interacts with DAPK3. Interacts with BRCA1; the DNA damage checkpoint promotes the association with BRCA1 after ionizing radiation. Interacts non-covalently with ubiquitin. Interacts with E3 ubiquitin-protein ligase CBLC. Interacts with UBTD1. Interacts with RIGI and RNF135; involved in RIGI ubiquitination and activation. Phosphorylated by AURKB.

The protein resides in the cell membrane. The protein localises to the endosome membrane. It carries out the reaction S-ubiquitinyl-[E1 ubiquitin-activating enzyme]-L-cysteine + [E2 ubiquitin-conjugating enzyme]-L-cysteine = [E1 ubiquitin-activating enzyme]-L-cysteine + S-ubiquitinyl-[E2 ubiquitin-conjugating enzyme]-L-cysteine.. The enzyme catalyses S-ubiquitinyl-[E1 ubiquitin-activating enzyme]-L-cysteine + [acceptor protein]-L-lysine = [E1 ubiquitin-activating enzyme]-L-cysteine + N(6)-monoubiquitinyl-[acceptor protein]-L-lysine.. It functions in the pathway protein modification; protein ubiquitination. Accepts ubiquitin from the E1 complex and catalyzes its covalent attachment to other proteins. In vitro catalyzes 'Lys-11'-, as well as 'Lys-48'-linked polyubiquitination. Cooperates with the E2 CDC34 and the SCF(FBXW11) E3 ligase complex for the polyubiquitination of NFKBIA leading to its subsequent proteasomal degradation. Acts as an initiator E2, priming the phosphorylated NFKBIA target at positions 'Lys-21' and/or 'Lys-22' with a monoubiquitin. Ubiquitin chain elongation is then performed by CDC34, building ubiquitin chains from the UBE2D3-primed NFKBIA-linked ubiquitin. Also acts as an initiator E2, in conjunction with RNF8, for the priming of PCNA. Monoubiquitination of PCNA, and its subsequent polyubiquitination, are essential events in the operation of the DNA damage tolerance (DDT) pathway that is activated after DNA damage caused by UV or chemical agents during S-phase. Associates with the BRCA1/BARD1 E3 ligase complex to perform ubiquitination at DNA damage sites following ionizing radiation leading to DNA repair. Targets DAPK3 for ubiquitination which influences promyelocytic leukemia protein nuclear body (PML-NB) formation in the nucleus. In conjunction with the MDM2 and TOPORS E3 ligases, functions ubiquitination of p53/TP53. In conjunction with the CBL E3 ligase, targets EGFR for polyubiquitination at the plasma membrane as well as during its internalization and transport on endosomes. In conjunction with the STUB1 E3 quality control E3 ligase, ubiquitinates unfolded proteins to catalyze their immediate destruction. Together with RNF135, catalyzes the viral RNA-dependent 'Lys-63'-linked polyubiquitination of RIGI to activate the downstream signaling pathway that leads to interferon beta production. Together with ZNF598, catalyzes ubiquitination of 40S ribosomal proteins in response to ribosome collisions. In cooperation with the GATOR2 complex, catalyzes 'Lys-6'-linked ubiquitination of NPRL2. The chain is Ubiquitin-conjugating enzyme E2 D3 (UBE2D3) from Bos taurus (Bovine).